The sequence spans 124 residues: MTETRFSKDHEWVRLDGDVATVGITDHAQSALGDVVFVELPETGRHVDAGEACAVVESVKAASDVYAPLAGTVTEANGALADDPGMVNAQAESGAWFFRMTLDDRAAFDALLTADDYQAFLATL.

The 83-residue stretch at 19 to 101 (VATVGITDHA…ESGAWFFRMT (83 aa)) folds into the Lipoyl-binding domain. Lys-60 carries the N6-lipoyllysine modification.

The protein belongs to the GcvH family. In terms of assembly, the glycine cleavage system is composed of four proteins: P, T, L and H. Requires (R)-lipoate as cofactor.

The glycine cleavage system catalyzes the degradation of glycine. The H protein shuttles the methylamine group of glycine from the P protein to the T protein. This Acidiphilium cryptum (strain JF-5) protein is Glycine cleavage system H protein.